The sequence spans 711 residues: Glycine--tRNA ligase beta subunit (711 aa).

The protein belongs to the class-II aminoacyl-tRNA synthetase family. Tetramer of two alpha and two beta subunits.

It localises to the cytoplasm. It catalyses the reaction tRNA(Gly) + glycine + ATP = glycyl-tRNA(Gly) + AMP + diphosphate. The chain is Glycine--tRNA ligase beta subunit from Polaromonas naphthalenivorans (strain CJ2).